The sequence spans 231 residues: Octanoyltransferase (231 aa).

The BPL/LPL catalytic domain occupies 49-224 (ADTPDEIWLL…ALQRLLPPVY (176 aa)). Residues 88 to 95 (RGGQITYH), 155 to 157 (ALG), and 168 to 170 (GLA) contribute to the substrate site. Residue Cys186 is the Acyl-thioester intermediate of the active site.

It belongs to the LipB family.

The protein resides in the cytoplasm. The catalysed reaction is octanoyl-[ACP] + L-lysyl-[protein] = N(6)-octanoyl-L-lysyl-[protein] + holo-[ACP] + H(+). Its pathway is protein modification; protein lipoylation via endogenous pathway; protein N(6)-(lipoyl)lysine from octanoyl-[acyl-carrier-protein]: step 1/2. Its function is as follows. Catalyzes the transfer of endogenously produced octanoic acid from octanoyl-acyl-carrier-protein onto the lipoyl domains of lipoate-dependent enzymes. Lipoyl-ACP can also act as a substrate although octanoyl-ACP is likely to be the physiological substrate. In Aromatoleum aromaticum (strain DSM 19018 / LMG 30748 / EbN1) (Azoarcus sp. (strain EbN1)), this protein is Octanoyltransferase.